We begin with the raw amino-acid sequence, 156 residues long: Transcription antitermination protein NusB (156 aa).

It belongs to the NusB family.

Functionally, involved in transcription antitermination. Required for transcription of ribosomal RNA (rRNA) genes. Binds specifically to the boxA antiterminator sequence of the ribosomal RNA (rrn) operons. This is Transcription antitermination protein NusB from Clostridium kluyveri (strain ATCC 8527 / DSM 555 / NBRC 12016 / NCIMB 10680 / K1).